A 131-amino-acid polypeptide reads, in one-letter code: Profilin-2 (131 aa).

Belongs to the profilin family. Occurs in many kinds of cells as a complex with monomeric actin in a 1:1 ratio.

The protein resides in the cytoplasm. The protein localises to the cytoskeleton. Functionally, binds to actin and affects the structure of the cytoskeleton. At high concentrations, profilin prevents the polymerization of actin, whereas it enhances it at low concentrations. By binding to PIP2, it inhibits the formation of IP3 and DG. The sequence is that of Profilin-2 (PRO2) from Triticum aestivum (Wheat).